We begin with the raw amino-acid sequence, 254 residues long: 4-hydroxy-tetrahydrodipicolinate reductase (254 aa).

Residues Gly8–Met13, Gly87–Thr89, and Ala111–Met114 each bind NAD(+). His143 serves as the catalytic Proton donor/acceptor. (S)-2,3,4,5-tetrahydrodipicolinate is bound at residue His144. Lys147 serves as the catalytic Proton donor. Position 153-154 (Gly153–Thr154) interacts with (S)-2,3,4,5-tetrahydrodipicolinate.

Belongs to the DapB family.

Its subcellular location is the cytoplasm. It catalyses the reaction (S)-2,3,4,5-tetrahydrodipicolinate + NAD(+) + H2O = (2S,4S)-4-hydroxy-2,3,4,5-tetrahydrodipicolinate + NADH + H(+). It carries out the reaction (S)-2,3,4,5-tetrahydrodipicolinate + NADP(+) + H2O = (2S,4S)-4-hydroxy-2,3,4,5-tetrahydrodipicolinate + NADPH + H(+). It functions in the pathway amino-acid biosynthesis; L-lysine biosynthesis via DAP pathway; (S)-tetrahydrodipicolinate from L-aspartate: step 4/4. Its function is as follows. Catalyzes the conversion of 4-hydroxy-tetrahydrodipicolinate (HTPA) to tetrahydrodipicolinate. The chain is 4-hydroxy-tetrahydrodipicolinate reductase from Campylobacter curvus (strain 525.92).